A 317-amino-acid chain; its full sequence is Ferrochelatase (317 aa).

Fe cation is bound by residues His-187 and Glu-268.

It belongs to the ferrochelatase family.

The protein resides in the cytoplasm. It catalyses the reaction heme b + 2 H(+) = protoporphyrin IX + Fe(2+). The protein operates within porphyrin-containing compound metabolism; protoheme biosynthesis; protoheme from protoporphyrin-IX: step 1/1. Its function is as follows. Catalyzes the ferrous insertion into protoporphyrin IX. The sequence is that of Ferrochelatase from Campylobacter concisus (strain 13826).